A 209-amino-acid chain; its full sequence is Dual specificity phosphatase 29 (209 aa).

One can recognise a Tyrosine-protein phosphatase domain in the interval 44–193 (NHVNEVWPNL…LRELDIQLAL (150 aa)). Substrate is bound at residue 137 to 144 (NCAMGRSR). Cysteine 138 acts as the Phosphocysteine intermediate in catalysis.

Belongs to the protein-tyrosine phosphatase family. Non-receptor class dual specificity subfamily.

It localises to the cytoplasm. Its subcellular location is the nucleus. It catalyses the reaction O-phospho-L-tyrosyl-[protein] + H2O = L-tyrosyl-[protein] + phosphate. The catalysed reaction is O-phospho-L-seryl-[protein] + H2O = L-seryl-[protein] + phosphate. It carries out the reaction O-phospho-L-threonyl-[protein] + H2O = L-threonyl-[protein] + phosphate. In terms of biological role, dual specificity phosphatase able to dephosphorylate phosphotyrosine, phosphoserine and phosphothreonine residues within the same substrate, with a preference for phosphotyrosine as a substrate. Involved in the modulation of AMPK and MAPK1/2 signaling pathways. The polypeptide is Dual specificity phosphatase 29 (dusp29) (Xenopus tropicalis (Western clawed frog)).